Consider the following 320-residue polypeptide: tRNA (guanine(10)-N2)-dimethyltransferase (320 aa).

Residues Glu46 to Glu136 form the THUMP domain.

Belongs to the methyltransferase superfamily. Trm-G10 family. In terms of assembly, monomer.

Its subcellular location is the cytoplasm. The catalysed reaction is guanosine(10) in tRNA + 2 S-adenosyl-L-methionine = N(2)-dimethylguanosine(10) in tRNA + 2 S-adenosyl-L-homocysteine + 2 H(+). Catalyzes the adenosylmethionine-dependent methylation of the exocyclic amino group (N(2)) of guanosine at position 10 of various tRNAs. Acts via a two-step process that leads to the formation of either N(2)-monomethyl (m(2)G) or N(2)-dimethylguanosine (m(2)(2)G). The chain is tRNA (guanine(10)-N2)-dimethyltransferase (trmG10) from Archaeoglobus fulgidus (strain ATCC 49558 / DSM 4304 / JCM 9628 / NBRC 100126 / VC-16).